The following is a 463-amino-acid chain: Cysteine--tRNA ligase (463 aa).

Residue C29 coordinates Zn(2+). The short motif at 31 to 41 (MTIYDLCHIGH) is the 'HIGH' region element. Zn(2+) contacts are provided by C218, H243, and E247. A 'KMSKS' region motif is present at residues 275 to 279 (KMSKS). Residue K278 coordinates ATP.

The protein belongs to the class-I aminoacyl-tRNA synthetase family. As to quaternary structure, monomer. It depends on Zn(2+) as a cofactor.

The protein resides in the cytoplasm. The enzyme catalyses tRNA(Cys) + L-cysteine + ATP = L-cysteinyl-tRNA(Cys) + AMP + diphosphate. This chain is Cysteine--tRNA ligase, found in Polaromonas naphthalenivorans (strain CJ2).